Consider the following 438-residue polypeptide: Xylose isomerase (438 aa).

Catalysis depends on residues His-100 and Asp-103. Residues Glu-231, Glu-267, His-270, Asp-295, Asp-306, Asp-308, and Asp-338 each coordinate Mg(2+).

It belongs to the xylose isomerase family. Homotetramer. It depends on Mg(2+) as a cofactor.

It localises to the cytoplasm. It carries out the reaction alpha-D-xylose = alpha-D-xylulofuranose. This is Xylose isomerase (xylA) from Thermoanaerobacter pseudethanolicus (strain ATCC 33223 / 39E) (Clostridium thermohydrosulfuricum).